Consider the following 158-residue polypeptide: Transcription elongation factor GreA (158 aa).

Residues A47–D74 are a coiled coil.

Belongs to the GreA/GreB family.

Its function is as follows. Necessary for efficient RNA polymerase transcription elongation past template-encoded arresting sites. The arresting sites in DNA have the property of trapping a certain fraction of elongating RNA polymerases that pass through, resulting in locked ternary complexes. Cleavage of the nascent transcript by cleavage factors such as GreA or GreB allows the resumption of elongation from the new 3'terminus. GreA releases sequences of 2 to 3 nucleotides. This Rhodopseudomonas palustris (strain ATCC BAA-98 / CGA009) protein is Transcription elongation factor GreA.